A 139-amino-acid polypeptide reads, in one-letter code: 6,7-dimethyl-8-ribityllumazine synthase (139 aa).

5-amino-6-(D-ribitylamino)uracil-binding positions include Phe-11, 42–44 (ALE), and 66–68 (VVI). Position 71–72 (71–72 (ET)) interacts with (2S)-2-hydroxy-3-oxobutyl phosphate. His-74 (proton donor) is an active-site residue. Residue Asn-98 coordinates 5-amino-6-(D-ribitylamino)uracil. Position 112 (Arg-112) interacts with (2S)-2-hydroxy-3-oxobutyl phosphate.

It belongs to the DMRL synthase family.

The catalysed reaction is (2S)-2-hydroxy-3-oxobutyl phosphate + 5-amino-6-(D-ribitylamino)uracil = 6,7-dimethyl-8-(1-D-ribityl)lumazine + phosphate + 2 H2O + H(+). It functions in the pathway cofactor biosynthesis; riboflavin biosynthesis; riboflavin from 2-hydroxy-3-oxobutyl phosphate and 5-amino-6-(D-ribitylamino)uracil: step 1/2. Catalyzes the formation of 6,7-dimethyl-8-ribityllumazine by condensation of 5-amino-6-(D-ribitylamino)uracil with 3,4-dihydroxy-2-butanone 4-phosphate. This is the penultimate step in the biosynthesis of riboflavin. The protein is 6,7-dimethyl-8-ribityllumazine synthase of Zymomonas mobilis subsp. mobilis (strain ATCC 31821 / ZM4 / CP4).